The primary structure comprises 277 residues: Large ribosomal subunit protein uL2 (277 aa).

Residues 222–265 (GVAMNPIDHPHGGGEGRTSGGRHPVTPWGKPTKGKKTRTNKSTD) are disordered.

This sequence belongs to the universal ribosomal protein uL2 family. Part of the 50S ribosomal subunit. Forms a bridge to the 30S subunit in the 70S ribosome.

In terms of biological role, one of the primary rRNA binding proteins. Required for association of the 30S and 50S subunits to form the 70S ribosome, for tRNA binding and peptide bond formation. It has been suggested to have peptidyltransferase activity; this is somewhat controversial. Makes several contacts with the 16S rRNA in the 70S ribosome. The chain is Large ribosomal subunit protein uL2 from Bradyrhizobium sp. (strain BTAi1 / ATCC BAA-1182).